The following is a 476-amino-acid chain: Membrane-bound lytic murein transglycosylase F (476 aa).

A signal peptide spans 1-15 (MRSFLLILFCVSLLT). The non-LT domain stretch occupies residues 16-258 (GCQGERVDAA…HLNEKYFAHV (243 aa)). The interval 259–476 (KRFDYVDTRA…QSEISAAQPN (218 aa)) is LT domain. Glu303 is an active-site residue. Residues 456–476 (EAQQQTAEKQSQSEISAAQPN) are disordered.

This sequence in the N-terminal section; belongs to the bacterial solute-binding protein 3 family. The protein in the C-terminal section; belongs to the transglycosylase Slt family.

It is found in the cell outer membrane. The catalysed reaction is Exolytic cleavage of the (1-&gt;4)-beta-glycosidic linkage between N-acetylmuramic acid (MurNAc) and N-acetylglucosamine (GlcNAc) residues in peptidoglycan, from either the reducing or the non-reducing ends of the peptidoglycan chains, with concomitant formation of a 1,6-anhydrobond in the MurNAc residue.. In terms of biological role, murein-degrading enzyme that degrades murein glycan strands and insoluble, high-molecular weight murein sacculi, with the concomitant formation of a 1,6-anhydromuramoyl product. Lytic transglycosylases (LTs) play an integral role in the metabolism of the peptidoglycan (PG) sacculus. Their lytic action creates space within the PG sacculus to allow for its expansion as well as for the insertion of various structures such as secretion systems and flagella. The chain is Membrane-bound lytic murein transglycosylase F from Shewanella loihica (strain ATCC BAA-1088 / PV-4).